A 132-amino-acid chain; its full sequence is Histone H2A-alpha (132 aa).

Ser2 carries the N-acetylserine modification. N6-acetyllysine is present on residues Lys5 and Lys9. Gln106 is subject to N5-methylglutamine. A Phosphoserine modification is found at Ser129. The [ST]-Q motif signature appears at Ser129–Gln130.

It belongs to the histone H2A family. The nucleosome is a histone octamer containing two molecules each of H2A, H2B, H3 and H4 assembled in one H3-H4 heterotetramer and two H2A-H2B heterodimers. The octamer wraps approximately 147 bp of DNA. Interacts with mdb1 (via BRCT domain) in vitro; this interaction requires phosphorylation of this protein at the S/T-Q motif. Post-translationally, phosphorylated to form H2AS128ph (gamma-H2A) in response to DNA double-strand breaks (DSBs) generated by exogenous genotoxic agents and by stalled replication forks. Phosphorylation is dependent on the DNA damage checkpoint kinases rad3/ATR and tel1/ATM, spreads on either side of a detected DSB site and may mark the surrounding chromatin for recruitment of proteins required for DNA damage signaling and repair. Gamma-H2A is required for recruiting crb2, a modulator of DNA damage checkpoint signaling, to DSB sites. Gamma-H2A is removed from the DNA prior to the strand invasion-primer extension step of the repair process and subsequently dephosphorylated. Dephosphorylation is necessary for efficient recovery from the DNA damage checkpoint. In terms of processing, acetylated by esa1 to form H2AK4ac and H2AK7ac.

The protein resides in the nucleus. Its subcellular location is the chromosome. Its function is as follows. Core component of nucleosome which plays a central role in DNA double strand break (DSB) repair. Nucleosomes wrap and compact DNA into chromatin, limiting DNA accessibility to the cellular machineries which require DNA as a template. Histones thereby play a central role in transcription regulation, DNA repair, DNA replication and chromosomal stability. DNA accessibility is regulated via a complex set of post-translational modifications of histones, also called histone code, and nucleosome remodeling. This chain is Histone H2A-alpha (hta1), found in Schizosaccharomyces pombe (strain 972 / ATCC 24843) (Fission yeast).